Here is a 281-residue protein sequence, read N- to C-terminus: Pre T-cell antigen receptor alpha (281 aa).

An N-terminal signal peptide occupies residues 1-23 (MAGTWLLLLLALGCPALPTGVGG). The Extracellular portion of the chain corresponds to 24-146 (TPFPSLAPPI…QEPLRGTPGG (123 aa)). C47 and C107 are joined by a disulfide. N67 is a glycosylation site (N-linked (GlcNAc...) asparagine). Residues 147–167 (ALWLGVLRLLLFKLLLFDLLL) traverse the membrane as a helical segment. The Cytoplasmic portion of the chain corresponds to 168-281 (TCSCLCDPAG…LPPPLQAGAA (114 aa)). The segment at 196 to 233 (LHPATETGGREATSSPRPQPRDRRWGDTPPGRKPGSPV) is disordered.

As to quaternary structure, heterodimer with TCRB; disulfide linked. This heterodimer assembles with CD3 proteins into a signaling-competent pre-T-cell receptor complex. Interacts with RHBDD1. Expressed in immature but not mature T-cells. Also found in CD34+ cells from peripheral blood, CD34+ precursors from umbilical cord blood and adult bone marrow.

Its subcellular location is the membrane. The protein resides in the cell membrane. Functionally, component of the pre-T-cell receptor complex (composed of PTCRA, TCRB and the CD3 complex) that has a crucial role in early T-cell development, particularly alpha-beta T cell differentiation. The chain is Pre T-cell antigen receptor alpha from Homo sapiens (Human).